Here is a 131-residue protein sequence, read N- to C-terminus: Small ribosomal subunit protein uS8 (131 aa).

It belongs to the universal ribosomal protein uS8 family. As to quaternary structure, part of the 30S ribosomal subunit. Contacts proteins S5 and S12.

Its function is as follows. One of the primary rRNA binding proteins, it binds directly to 16S rRNA central domain where it helps coordinate assembly of the platform of the 30S subunit. The polypeptide is Small ribosomal subunit protein uS8 (Neorickettsia sennetsu (strain ATCC VR-367 / Miyayama) (Ehrlichia sennetsu)).